We begin with the raw amino-acid sequence, 211 residues long: Protein-L-isoaspartate O-methyltransferase (211 aa).

The active site involves serine 62.

Belongs to the methyltransferase superfamily. L-isoaspartyl/D-aspartyl protein methyltransferase family.

It is found in the cytoplasm. The catalysed reaction is [protein]-L-isoaspartate + S-adenosyl-L-methionine = [protein]-L-isoaspartate alpha-methyl ester + S-adenosyl-L-homocysteine. Catalyzes the methyl esterification of L-isoaspartyl residues in peptides and proteins that result from spontaneous decomposition of normal L-aspartyl and L-asparaginyl residues. It plays a role in the repair and/or degradation of damaged proteins. The polypeptide is Protein-L-isoaspartate O-methyltransferase (Shewanella denitrificans (strain OS217 / ATCC BAA-1090 / DSM 15013)).